A 244-amino-acid chain; its full sequence is Small ribosomal subunit protein eS4 (244 aa).

Positions 43–106 (LPLLLVVRDV…DENYLVLFDE (64 aa)) constitute an S4 RNA-binding domain.

Belongs to the eukaryotic ribosomal protein eS4 family.

This Methanococcus maripaludis (strain C5 / ATCC BAA-1333) protein is Small ribosomal subunit protein eS4.